The primary structure comprises 998 residues: MKYATGTDNAMTSGISGQTNSSNSASNEMQPTTSTPTAVHKEATSTATTTATYANGNPNPSANPSQSQPSNALFCEQVTTVTNLFEKWNDCERTVVMYALLKRLRYPSLKFLQYSIDSNLTQNLGTSQTNLSSVVIDINANNPVYLQNLLNAYKTFQPCDLLDAMSSSSSDKDSMPCYGSDFQITTSAQCDERKLYARKEDILHEVLNMLPLLKPGNEEAKLIYLTLIPVAVKDTMQQIVPTELVQQIFSYLLIHPAITSEDRRSLNIWLRHLEDHIQAAAAGLTNRSYFLQPSPQLVAGGSSTGSGSCSSSATSSSTASCSSVASSSLCPASGSRSSRTNDWQTIAPPSKQLQNKLAGDWRGSGGGSSSGSINPLCDNLNGITLNELASSQNSLGLSLEGSSSLVNGVVAGAGSMLGIGGGDDHDTSFSKNGTEILDFDPVTANMGEACSLASSSLCGRNGGNPVEDRSQPPPNLQQQLLQPPPYASILMGNVGDQFGEINRWSLDSKIAALKTRRSNSLTTQTISSCSSSSNSSVITVNDNCSNSTENLAQFANKPRSFSLSIEHQRGALMNSGSDTRLDEFKPNYIKFHTRNVGMSGIGLWLKSLRLHKYIELFKNMTYEEMLLITEDFLQSVGVTKGASHKLALCIDKLKERGNILNRVEQELLTGQMELSTAVEELTNIVLTPMKPLESPGPPEENIGLRFLKVIDIVTNTLQQDPYAVQDDETLGVLMWILDRSIHNEAFMNHASQLKDLKFKLSKMKISMVPKMHHVKPAGVGPNNGNINKPRWNGKTRKCDSKSGSNDRINNRKNSNDMLNFSLNCLPHPLPHHSQQAPPPLPQFDYNGYGGGPSHQPQYKSSSYPSFMGNPQQQPPPPPSSKSHHHPQQMQQMLQQHNHFPALPQQTPPQSHRRSLNNLILVAGGPQQPQQLIFKPGQGVLTNNGSNDNLGLERNQQPQQQQQRKLSGGVSSAEQQPKKTMAAVVMENLAKFDQHFTLF.

The segment covering 1–37 (MKYATGTDNAMTSGISGQTNSSNSASNEMQPTTSTPT) has biased composition (polar residues). Disordered stretches follow at residues 1–45 (MKYA…EATS), 50–69 (TATY…QSQP), and 329–370 (LCPA…GSSS). The segment covering 329–338 (LCPASGSRSS) has biased composition (low complexity). A phosphoserine mark is found at S564 and S575. The interaction with cup stretch occupies residues 583-763 (EFKPNYIKFH…KDLKFKLSKM (181 aa)). One can recognise an SAM domain in the interval 600-654 (GIGLWLKSLRLHKYIELFKNMTYEEMLLITEDFLQSVGVTKGASHKLALCIDKLK). Disordered regions lie at residues 773–892 (HVKP…MQQM) and 943–977 (NGSN…QQPK). Composition is skewed to polar residues over residues 801 to 822 (KSGS…NFSL) and 854 to 864 (HQPQYKSSSYP). S971 carries the phosphoserine modification.

This sequence belongs to the SMAUG family. As to quaternary structure, interacts with oskar (osk). Binds to the 3'-UTR of nos. Interacts with cup, which in turn recruits eIF4-E, leading to an indirect interaction between smg and eIF4-E that prevents mRNA translation.

It localises to the cytoplasm. Functionally, translation regulator that binds to the 3'-UTR of specific mRNAs such as nanos (nos) and prevent their translation. Prevents translation of unlocalized nos in the bulk cytoplasm via the recruitment of cup. The protein is Protein Smaug of Drosophila sechellia (Fruit fly).